The sequence spans 325 residues: Palmitoyltransferase PFA3 (325 aa).

The Cytoplasmic segment spans residues 1-8; that stretch reads MHICSLIP. A helical membrane pass occupies residues 9-29; sequence ILFPKLLTCGLALYSAVVLWL. Position 30 (Lys30) is a topological domain, lumenal. A helical transmembrane segment spans residues 31 to 51; that stretch reads VSVIGSFIQGTVLLTLVPLIL. Topologically, residues 52–147 are cytoplasmic; it reads YAYFSTIAVG…PGCIGYNNHK (96 aa). The DHHC domain maps to 104–154; the sequence is RYCVKCKVWKPDRCHHCSACDKCYLRRDHHCVWFPGCIGYNNHKFFLHFLL. Residues 148–168 form a helical membrane-spanning segment; that stretch reads FFLHFLLYASVYAFWICIITT. Residues 169 to 188 lie on the Lumenal side of the membrane; it reads WDLVVWFRAHSYERELLNVH. Residues 189–209 form a helical membrane-spanning segment; it reads LVCLWALSAAATVALTAFCAF. The Cytoplasmic segment spans residues 210–325; that stretch reads NIYLVCKNET…TRFNSKRAVQ (116 aa).

Belongs to the DHHC palmitoyltransferase family. PFA3 subfamily. Autopalmitoylated.

The protein resides in the vacuole membrane. The catalysed reaction is L-cysteinyl-[protein] + hexadecanoyl-CoA = S-hexadecanoyl-L-cysteinyl-[protein] + CoA. In terms of biological role, palmitoyltransferase specific for VAC8. Palmitoylates VAC8 at one or more of its N-terminal cysteine residues, which is required for its proper membrane localization. The chain is Palmitoyltransferase PFA3 (PFA3) from Eremothecium gossypii (strain ATCC 10895 / CBS 109.51 / FGSC 9923 / NRRL Y-1056) (Yeast).